Reading from the N-terminus, the 67-residue chain is Prokaryotic ubiquitin-like protein Pup (67 aa).

The segment covering 1–13 (MAGQEQQQPQSRD) has biased composition (low complexity). Residues 1 to 48 (MAGQEQQQPQSRDSQVDEDIPEAPPAPPEAQASASTEGVDDLLDEIDG) are disordered. Positions 25–61 (PAPPEAQASASTEGVDDLLDEIDGVLESNAEEFVRAF) are ARC ATPase binding. Positions 38 to 48 (GVDDLLDEIDG) are enriched in acidic residues. At Gln-67 the chain carries Deamidated glutamine. Residue Gln-67 forms an Isoglutamyl lysine isopeptide (Gln-Lys) (interchain with K-? in acceptor proteins) linkage.

Belongs to the prokaryotic ubiquitin-like protein family. Strongly interacts with the proteasome-associated ATPase ARC through a hydrophobic interface; the interacting region of Pup lies in its C-terminal half. There is one Pup binding site per ARC hexamer ring. In terms of processing, is modified by deamidation of its C-terminal glutamine to glutamate by the deamidase Dop, a prerequisite to the subsequent pupylation process.

It functions in the pathway protein degradation; proteasomal Pup-dependent pathway. Protein modifier that is covalently attached to lysine residues of substrate proteins, thereby targeting them for proteasomal degradation. The tagging system is termed pupylation. This chain is Prokaryotic ubiquitin-like protein Pup, found in Pseudarthrobacter chlorophenolicus (strain ATCC 700700 / DSM 12829 / CIP 107037 / JCM 12360 / KCTC 9906 / NCIMB 13794 / A6) (Arthrobacter chlorophenolicus).